Consider the following 314-residue polypeptide: Olfactory receptor 5G3 (314 aa).

The Extracellular segment spans residues 1–24 (MEDKNQTVVTEFLLLGLTDHPYQK). Asn-5 carries N-linked (GlcNAc...) asparagine glycosylation. A helical membrane pass occupies residues 25-45 (IVLFFMFLFVYLITLGGNLGM). Topologically, residues 46–97 (ITLIWIDPRLHTPMYFFLRHLSFVDICSSSSVVPKMLCNIFAEKKDITFLGC) are cytoplasmic. Cys-97 and Cys-179 are joined by a disulfide. The chain crosses the membrane as a helical span at residues 98-118 (AAQMWFFGLFEAAECFLLAAM). The Extracellular portion of the chain corresponds to 119 to 143 (AYDRYVAICKPLLYTLIMSQQVCMQ). Residues 144 to 164 (LVVGPYAMALISTMTHTIFTF) form a helical membrane-spanning segment. The Cytoplasmic portion of the chain corresponds to 165 to 167 (CLP). The chain crosses the membrane as a helical span at residues 168-188 (FCGSNIINHFFCDIFPLLSLA). Topologically, residues 189–196 (CADTWVNK) are extracellular. A helical membrane pass occupies residues 197–217 (FVLFVLAGAIGVLSGLIIMVS). The Cytoplasmic segment spans residues 218-237 (YICILMTILKIQTADGKQKA). The chain crosses the membrane as a helical span at residues 238–258 (FFTCFSHLAAVSILYGTLFLI). Topologically, residues 259–268 (YVRPSSSSSL) are extracellular. The chain crosses the membrane as a helical span at residues 269-289 (GIYKVISLFYTVVIPMVNPLI). At 290 to 314 (YSLRNKEVKDAFRRKIERKKFIIGR) the chain is on the cytoplasmic side.

It belongs to the G-protein coupled receptor 1 family.

The protein localises to the cell membrane. In terms of biological role, odorant receptor. This Homo sapiens (Human) protein is Olfactory receptor 5G3 (OR5G3).